Consider the following 151-residue polypeptide: 3-hydroxyacyl-[acyl-carrier-protein] dehydratase FabZ (151 aa).

The active site involves H54.

Belongs to the thioester dehydratase family. FabZ subfamily.

Its subcellular location is the cytoplasm. It catalyses the reaction a (3R)-hydroxyacyl-[ACP] = a (2E)-enoyl-[ACP] + H2O. In terms of biological role, involved in unsaturated fatty acids biosynthesis. Catalyzes the dehydration of short chain beta-hydroxyacyl-ACPs and long chain saturated and unsaturated beta-hydroxyacyl-ACPs. This Idiomarina loihiensis (strain ATCC BAA-735 / DSM 15497 / L2-TR) protein is 3-hydroxyacyl-[acyl-carrier-protein] dehydratase FabZ.